We begin with the raw amino-acid sequence, 405 residues long: Succinyl-CoA--L-malate CoA-transferase beta subunit (405 aa).

Asp-175 acts as the Nucleophile in catalysis.

This sequence belongs to the CoA-transferase III family. Forms a large complex composed of six heterodimers (alpha, beta).

It carries out the reaction succinyl-CoA + (S)-malate = (S)-malyl-CoA + succinate. The enzyme catalyses (3S)-citramalate + succinyl-CoA = (3S)-citramalyl-CoA + succinate. Involved in the 3-hydroxypropionate cycle used for autotrophic carbon dioxide fixation. Catalyzes the transfer of CoA moiety from succinyl-CoA to L-malate to yield L-malyl-CoA. The protein is Succinyl-CoA--L-malate CoA-transferase beta subunit (smtB) of Chloroflexus aurantiacus (strain ATCC 29366 / DSM 635 / J-10-fl).